A 541-amino-acid polypeptide reads, in one-letter code: Threonine--tRNA ligase catalytic subunit (541 aa).

A catalytic region spans residues aspartate 135 to proline 429. 3 residues coordinate Zn(2+): cysteine 227, histidine 278, and histidine 406.

This sequence belongs to the class-II aminoacyl-tRNA synthetase family. Homodimer. Probably interacts with its editing subunit. Zn(2+) is required as a cofactor.

The protein localises to the cytoplasm. It catalyses the reaction tRNA(Thr) + L-threonine + ATP = L-threonyl-tRNA(Thr) + AMP + diphosphate + H(+). Functionally, catalyzes the attachment of threonine to tRNA(Thr) in a two-step reaction: L-threonine is first activated by ATP to form Thr-AMP and then transferred to the acceptor end of tRNA(Thr). Also activates L-serine and transfers it to tRNA(Thr) but cannot deacylate incorrectly charged amino acid; unlike most archaea the editing function is found in a freestanding protein. The polypeptide is Threonine--tRNA ligase catalytic subunit (Metallosphaera sedula (strain ATCC 51363 / DSM 5348 / JCM 9185 / NBRC 15509 / TH2)).